Reading from the N-terminus, the 387-residue chain is 23S rRNA (uracil(747)-C(5))-methyltransferase RlmC (387 aa).

4 residues coordinate [4Fe-4S] cluster: Cys3, Cys11, Cys14, and Cys86. The S-adenosyl-L-methionine site is built by Gln211, Phe240, Glu269, and Asn319. The active-site Nucleophile is the Cys346.

The protein belongs to the class I-like SAM-binding methyltransferase superfamily. RNA M5U methyltransferase family. RlmC subfamily.

The catalysed reaction is uridine(747) in 23S rRNA + S-adenosyl-L-methionine = 5-methyluridine(747) in 23S rRNA + S-adenosyl-L-homocysteine + H(+). Functionally, catalyzes the formation of 5-methyl-uridine at position 747 (m5U747) in 23S rRNA. This is 23S rRNA (uracil(747)-C(5))-methyltransferase RlmC from Pasteurella multocida (strain Pm70).